We begin with the raw amino-acid sequence, 462 residues long: Glycine--tRNA ligase (462 aa).

2 residues coordinate substrate: arginine 101 and glutamate 164. Residues 196-198, 206-211, 283-284, and 327-330 each bind ATP; these read RNE, FRTREF, EL, and GVDR. 211–215 contacts substrate; that stretch reads FEQME. 323-327 serves as a coordination point for substrate; that stretch reads EPSAG.

The protein belongs to the class-II aminoacyl-tRNA synthetase family. Homodimer.

It is found in the cytoplasm. The catalysed reaction is tRNA(Gly) + glycine + ATP = glycyl-tRNA(Gly) + AMP + diphosphate. Catalyzes the attachment of glycine to tRNA(Gly). In Thermobifida fusca (strain YX), this protein is Glycine--tRNA ligase.